The primary structure comprises 277 residues: Large ribosomal subunit protein uL2 (277 aa).

Disordered stretches follow at residues 37–60 (KNST…GHKH) and 223–265 (VVMN…KRTD). The segment covering 39–49 (STAGRNNNGHI) has biased composition (polar residues). Basic residues predominate over residues 50 to 60 (TTRHKGGGHKH). A compositionally biased stretch (basic and acidic residues) spans 229 to 244 (DHPHGGGEGRTGEARE).

Belongs to the universal ribosomal protein uL2 family. As to quaternary structure, part of the 50S ribosomal subunit. Forms a bridge to the 30S subunit in the 70S ribosome.

In terms of biological role, one of the primary rRNA binding proteins. Required for association of the 30S and 50S subunits to form the 70S ribosome, for tRNA binding and peptide bond formation. It has been suggested to have peptidyltransferase activity; this is somewhat controversial. Makes several contacts with the 16S rRNA in the 70S ribosome. The protein is Large ribosomal subunit protein uL2 of Neisseria meningitidis serogroup A / serotype 4A (strain DSM 15465 / Z2491).